A 353-amino-acid chain; its full sequence is Putative glycosyltransferase TagX (353 aa).

It belongs to the glycosyltransferase 2 family.

This chain is Putative glycosyltransferase TagX (tagX), found in Staphylococcus aureus (strain MRSA252).